The following is a 411-amino-acid chain: MTFIEEFIYKGYLNQCTDLARLSAITQEAKIAAYIGFDCTATSLHIGSLMQIMILRLLQKHGHTPIVIIGGGTSKIGDPAGKDVTRKALTQEDIKRNAEGIKKSLSKFIKFGKDQGDAIILDNAEWLDSLNYLDFLRDFGSYFSVNRMLTMDSVKLRLDRSHHLSFLELNYMLLQSYDFYYLSKNYNCILQLGGSDQWGNIVIGADLIRKISGKEVFGMTTPLLTTASGAKMGKTAAGAVWLNEDLLSPYDYYQYWRNCEDADVMRFAKLYSELDIVELNKFESLVSEDINAAKKQLAYELTKLCHGERLAKLALETAVKIFEQGDIDENLHTFILAPEILQSGISAYNLFYNANLARSKSEARKIIRGKGAKINDQLVEDENMTIDTNFLRNRKVIKLSVGKKRHILVKV.

Y34 contributes to the L-tyrosine binding site. Positions 39 to 48 (CTATSLHIGS) match the 'HIGH' region motif. The L-tyrosine site is built by Y171 and Q175. The short motif at 231 to 235 (KMGKT) is the 'KMSKS' region element. K234 is an ATP binding site. In terms of domain architecture, S4 RNA-binding spans 345-411 (ISAYNLFYNA…GKKRHILVKV (67 aa)).

The protein belongs to the class-I aminoacyl-tRNA synthetase family. TyrS type 1 subfamily. In terms of assembly, homodimer.

The protein resides in the cytoplasm. It catalyses the reaction tRNA(Tyr) + L-tyrosine + ATP = L-tyrosyl-tRNA(Tyr) + AMP + diphosphate + H(+). In terms of biological role, catalyzes the attachment of tyrosine to tRNA(Tyr) in a two-step reaction: tyrosine is first activated by ATP to form Tyr-AMP and then transferred to the acceptor end of tRNA(Tyr). The protein is Tyrosine--tRNA ligase of Rickettsia prowazekii (strain Madrid E).